The primary structure comprises 380 residues: Heme A synthase (380 aa).

Transmembrane regions (helical) follow at residues 36-56 (IRAW…VGGL), 125-145 (VIGL…KIPA), 151-171 (LILP…MVAS), 187-207 (LATH…SILQ), 227-247 (FGLA…GALV), 287-307 (LVQF…VMVW), 320-340 (FAFN…IVTV), and 344-364 (APWQ…VLIL). Residue His-292 coordinates heme. His-352 lines the heme pocket.

It belongs to the COX15/CtaA family. Type 2 subfamily. Interacts with CtaB. It depends on heme b as a cofactor.

It is found in the cell membrane. It catalyses the reaction Fe(II)-heme o + 2 A + H2O = Fe(II)-heme a + 2 AH2. It functions in the pathway porphyrin-containing compound metabolism; heme A biosynthesis; heme A from heme O: step 1/1. Functionally, catalyzes the conversion of heme O to heme A by two successive hydroxylations of the methyl group at C8. The first hydroxylation forms heme I, the second hydroxylation results in an unstable dihydroxymethyl group, which spontaneously dehydrates, resulting in the formyl group of heme A. The polypeptide is Heme A synthase (Ruegeria pomeroyi (strain ATCC 700808 / DSM 15171 / DSS-3) (Silicibacter pomeroyi)).